The chain runs to 59 residues: Large ribosomal subunit protein uL30 (59 aa).

The protein belongs to the universal ribosomal protein uL30 family. Part of the 50S ribosomal subunit.

The sequence is that of Large ribosomal subunit protein uL30 from Enterobacter sp. (strain 638).